Reading from the N-terminus, the 290-residue chain is Polyamine aminopropyltransferase (290 aa).

A PABS domain is found at 5–238 (QLWYEKLHSS…GIMTFAWASE (234 aa)). Glutamine 33 lines the S-methyl-5'-thioadenosine pocket. The spermidine site is built by histidine 64 and aspartate 88. S-methyl-5'-thioadenosine is bound by residues glutamate 108 and 140-141 (DG). Aspartate 158 functions as the Proton acceptor in the catalytic mechanism. 158-161 (DSTD) is a spermidine binding site. Proline 165 is a binding site for S-methyl-5'-thioadenosine.

This sequence belongs to the spermidine/spermine synthase family. In terms of assembly, homodimer or homotetramer.

It localises to the cytoplasm. The enzyme catalyses S-adenosyl 3-(methylsulfanyl)propylamine + putrescine = S-methyl-5'-thioadenosine + spermidine + H(+). Its pathway is amine and polyamine biosynthesis; spermidine biosynthesis; spermidine from putrescine: step 1/1. Catalyzes the irreversible transfer of a propylamine group from the amino donor S-adenosylmethioninamine (decarboxy-AdoMet) to putrescine (1,4-diaminobutane) to yield spermidine. The protein is Polyamine aminopropyltransferase of Hamiltonella defensa subsp. Acyrthosiphon pisum (strain 5AT).